The following is a 412-amino-acid chain: Inactive serine protease 35 (412 aa).

An N-terminal signal peptide occupies residues 1–23; the sequence is MGAMFFGLMLFTLGWTLIDGSES. Asparagine 110 carries N-linked (GlcNAc...) asparagine glycosylation. The Peptidase S1 domain occupies 124–407; the sequence is VYGTDSRFSI…ICLWMHGDDA (284 aa). Cysteine 154 and cysteine 170 are joined by a disulfide. A compositionally biased stretch (basic residues) spans 192 to 207; it reads RNKGGGKRRRGSRRNR. Positions 192–246 are disordered; it reads RNKGGGKRRRGSRRNRREVSGAGREGSQDSLKETAKAGRRRKGSARRQRAADGRP. Positions 217-227 are enriched in basic and acidic residues; it reads GSQDSLKETAK. Positions 228–239 are enriched in basic residues; that stretch reads AGRRRKGSARRQ.

It belongs to the peptidase S1 family.

Its subcellular location is the secreted. In Bos taurus (Bovine), this protein is Inactive serine protease 35 (PRSS35).